The following is a 408-amino-acid chain: Solute carrier family 35 member F1 (408 aa).

A disordered region spans residues 1-20 (MIPPEPPQPQLQPPPPPAPP). The next 10 membrane-spanning stretches (helical) occupy residues 60-80 (MLIS…IGLT), 94-114 (VFQS…TLAV), 129-147 (WWKY…YLVV), 159-179 (QLLD…FLLI), 186-206 (FIGI…DVLV), 221-241 (LLVL…ESII), 247-267 (VEFL…QLAI), 284-304 (LLYV…PVVI), 311-331 (SVNL…LFLF), and 335-355 (FSGL…LYSS).

Belongs to the SLC35F solute transporter family.

It localises to the cytoplasmic vesicle. The protein resides in the secretory vesicle. Its subcellular location is the synaptic vesicle membrane. Functionally, putative solute transporter. This is Solute carrier family 35 member F1 (Slc35f1) from Mus musculus (Mouse).